Consider the following 122-residue polypeptide: Protein SPIRAL1-like 3 (122 aa).

Disordered regions lie at residues 1–78 and 96–122; these read MGKA…NNYF and KVHAAPGGGSSLDYLFGGPSPAGSGNK. Over residues 32 to 61 the composition is skewed to low complexity; it reads TMGTTTTTTTTTTTDGTGGRPITTTTTTVT. Residue S73 is modified to Phosphoserine.

It belongs to the SPIRAL1 family. In terms of tissue distribution, ubiquitous. Preferentially expressed in above-ground organs.

Its function is as follows. Acts redundantly with SPR1 in maintaining the cortical microtubules organization essential for anisotropic cell growth. This is Protein SPIRAL1-like 3 (SP1L3) from Arabidopsis thaliana (Mouse-ear cress).